The primary structure comprises 496 residues: Ankyrin repeat domain-containing protein 34A (496 aa).

4 ANK repeats span residues 4-33 (TEGH…YVNE), 37-72 (QGET…DPNI), 76-106 (LGRT…DPSV), and 110-139 (AGAS…AKGT). Glutamine 15 is modified (N5-methylglutamine). 2 stretches are compositionally biased toward polar residues: residues 147-162 (DTSP…YLNS) and 180-191 (FCTSPSEIQLQT). The disordered stretch occupies residues 147–473 (DTSPSGTKKT…TKRKLVRRHS (327 aa)). Residues 204–214 (AQEEEEKRDVF) are compositionally biased toward basic and acidic residues. Positions 218-233 (LPKPPDDPSPSEPLPK) are enriched in pro residues. The segment covering 234–243 (PPRHPPKPLK) has biased composition (basic residues). At threonine 316 the chain carries Phosphothreonine. Basic residues predominate over residues 463–473 (RTKRKLVRRHS).

It belongs to the ANKRD34 family. Post-translationally, methylated at Gln-15 by N6AMT1.

In Homo sapiens (Human), this protein is Ankyrin repeat domain-containing protein 34A (ANKRD34A).